We begin with the raw amino-acid sequence, 47 residues long: IgA-inducing protein (47 aa).

The signal sequence occupies residues 1-24; sequence MKKRSVSGCNITILAVVFSHLSAG.

In terms of tissue distribution, expressed in Peyer patches, spleen, thymus, liver and mesenteric lymph node. Expressed at high levels by dendritic cells, and at lower levels by T-cells, monocytes and B-cells.

Its subcellular location is the secreted. Enhances IgA secretion from B-cells stimulated via CD40. The sequence is that of IgA-inducing protein (IGIP) from Bos taurus (Bovine).